We begin with the raw amino-acid sequence, 292 residues long: 4-hydroxy-tetrahydrodipicolinate synthase (292 aa).

Position 45 (threonine 45) interacts with pyruvate. Catalysis depends on tyrosine 133, which acts as the Proton donor/acceptor. The active-site Schiff-base intermediate with substrate is lysine 161. Residue isoleucine 203 participates in pyruvate binding.

Belongs to the DapA family. As to quaternary structure, homotetramer; dimer of dimers.

Its subcellular location is the cytoplasm. It catalyses the reaction L-aspartate 4-semialdehyde + pyruvate = (2S,4S)-4-hydroxy-2,3,4,5-tetrahydrodipicolinate + H2O + H(+). The protein operates within amino-acid biosynthesis; L-lysine biosynthesis via DAP pathway; (S)-tetrahydrodipicolinate from L-aspartate: step 3/4. Catalyzes the condensation of (S)-aspartate-beta-semialdehyde [(S)-ASA] and pyruvate to 4-hydroxy-tetrahydrodipicolinate (HTPA). The sequence is that of 4-hydroxy-tetrahydrodipicolinate synthase from Erwinia tasmaniensis (strain DSM 17950 / CFBP 7177 / CIP 109463 / NCPPB 4357 / Et1/99).